The sequence spans 1059 residues: Kinesin-like protein KIN-7K, chloroplastic (1059 aa).

2 stretches are compositionally biased toward low complexity: residues 1-35 (MSSR…SAGS) and 43-58 (PRSY…SSHF). A chloroplast-targeting transit peptide spans 1 to 48 (MSSRPSSSASSRRSSSPFSAGSRRPPTSSSSSAGSYLTGRLMPRSYST). The tract at residues 1–99 (MSSRPSSSAS…SPPSPVPFPS (99 aa)) is disordered. Residues 59 to 69 (FGGGGGSGGGS) are compositionally biased toward gly residues. Positions 70–87 (RSTTPGRRGSSSSSLVGP) are enriched in low complexity. Residues 88-97 (VPSPPSPVPF) are compositionally biased toward pro residues. One can recognise a Kinesin motor domain in the interval 114 to 431 (SISVTIRFRP…LKFASRAKRV (318 aa)). 194–201 (GVTSSGKT) is a binding site for ATP. The stretch at 435-518 (AARNRMIDEK…IQRLTKLILV (84 aa)) forms a coiled coil. A disordered region spans residues 526–570 (ALTDTSSHQRHNSVNEEDKVSTSQDSSMLVQNDSATKDSLSSASP). The span at 546–569 (STSQDSSMLVQNDSATKDSLSSAS) shows a compositional bias: polar residues. Coiled-coil stretches lie at residues 640-674 (EGTK…GEAS), 700-781 (ELEL…EENR), and 862-910 (LEDM…LEND). An RING-type zinc finger spans residues 1013–1048 (CKVCFESATAAVLLPCRHFCLCKPCSLACSECPLCR).

This sequence belongs to the TRAFAC class myosin-kinesin ATPase superfamily. Kinesin family. KIN-7 subfamily.

The protein localises to the plastid. The protein resides in the chloroplast. This Oryza sativa subsp. japonica (Rice) protein is Kinesin-like protein KIN-7K, chloroplastic.